Reading from the N-terminus, the 617-residue chain is Vacuolar protein sorting-associated protein 33B (617 aa).

Residue Ala2 is modified to N-acetylalanine.

This sequence belongs to the STXBP/unc-18/SEC1 family. As to quaternary structure, interacts with RAB11A and VIPAS39. Associates with adapter protein complex 3 (AP-3), clathrin:AP-3 and clathrin:HGS complexes. Post-translationally, phosphorylated on tyrosine residues.

Its subcellular location is the late endosome membrane. It localises to the lysosome membrane. It is found in the early endosome. The protein resides in the cytoplasmic vesicle. The protein localises to the clathrin-coated vesicle. Its subcellular location is the recycling endosome. In terms of biological role, may play a role in vesicle-mediated protein trafficking to lysosomal compartments and in membrane docking/fusion reactions of late endosomes/lysosomes. Required for proper trafficking and targeting of the collagen-modifying enzyme lysyl hydroxylase 3 (LH3) to intracellular collagen. Mediates phagolysosomal fusion in macrophages. Proposed to be involved in endosomal maturation implicating in part VIPAS39. In epithelial cells, the VPS33B:VIPAS39 complex may play a role in the apical RAB11A-dependentrecycling pathway and in the maintenance of the apical-basolateral polarity. Seems to be involved in the sorting of specific cargos from the trans-Golgi network to alpha-granule-destined multivesicular bodies (MVBs) promoting MVBs maturation in megakaryocytes. The sequence is that of Vacuolar protein sorting-associated protein 33B (Vps33b) from Mus musculus (Mouse).